A 544-amino-acid polypeptide reads, in one-letter code: Chaperonin GroEL 1 (544 aa).

Residues Thr29–Pro32, Asp86–Thr90, Gly413, and Asp495 each bind ATP.

This sequence belongs to the chaperonin (HSP60) family. Forms a cylinder of 14 subunits composed of two heptameric rings stacked back-to-back. Interacts with the co-chaperonin GroES.

It is found in the cytoplasm. The catalysed reaction is ATP + H2O + a folded polypeptide = ADP + phosphate + an unfolded polypeptide.. In terms of biological role, together with its co-chaperonin GroES, plays an essential role in assisting protein folding. The GroEL-GroES system forms a nano-cage that allows encapsulation of the non-native substrate proteins and provides a physical environment optimized to promote and accelerate protein folding. This is Chaperonin GroEL 1 from Synechococcus sp. (strain ATCC 27144 / PCC 6301 / SAUG 1402/1) (Anacystis nidulans).